Consider the following 164-residue polypeptide: ATP synthase subunit b 1 (164 aa).

The chain crosses the membrane as a helical span at residues 8–28; sequence PETWVAVAFVILMGVFAYFGV.

This sequence belongs to the ATPase B chain family. F-type ATPases have 2 components, F(1) - the catalytic core - and F(0) - the membrane proton channel. F(1) has five subunits: alpha(3), beta(3), gamma(1), delta(1), epsilon(1). F(0) has three main subunits: a(1), b(2) and c(10-14). The alpha and beta chains form an alternating ring which encloses part of the gamma chain. F(1) is attached to F(0) by a central stalk formed by the gamma and epsilon chains, while a peripheral stalk is formed by the delta and b chains.

It is found in the cell inner membrane. Functionally, f(1)F(0) ATP synthase produces ATP from ADP in the presence of a proton or sodium gradient. F-type ATPases consist of two structural domains, F(1) containing the extramembraneous catalytic core and F(0) containing the membrane proton channel, linked together by a central stalk and a peripheral stalk. During catalysis, ATP synthesis in the catalytic domain of F(1) is coupled via a rotary mechanism of the central stalk subunits to proton translocation. Component of the F(0) channel, it forms part of the peripheral stalk, linking F(1) to F(0). This chain is ATP synthase subunit b 1, found in Rhodopseudomonas palustris (strain BisB18).